We begin with the raw amino-acid sequence, 445 residues long: F-box protein At5g10340 (445 aa).

The F-box domain occupies S64 to I112.

The sequence is that of F-box protein At5g10340 from Arabidopsis thaliana (Mouse-ear cress).